The primary structure comprises 250 residues: Proteasome subunit alpha type-4-2 (250 aa).

In terms of assembly, the 26S proteasome consists of a 20S proteasome core and two 19S regulatory subunits. The 20S proteasome core is composed of 28 subunits that are arranged in four stacked rings, resulting in a barrel-shaped structure. The two end rings are each formed by seven alpha subunits, and the two central rings are each formed by seven beta subunits. The catalytic chamber with the active sites is on the inside of the barrel.

Its subcellular location is the cytoplasm. It is found in the nucleus. In terms of biological role, the proteasome is a multicatalytic proteinase complex which is characterized by its ability to cleave peptides with Arg, Phe, Tyr, Leu, and Glu adjacent to the leaving group at neutral or slightly basic pH. The proteasome has an ATP-dependent proteolytic activity. The polypeptide is Proteasome subunit alpha type-4-2 (Oryza sativa subsp. indica (Rice)).